Here is an 89-residue protein sequence, read N- to C-terminus: Large ribosomal subunit protein bL27 (89 aa).

The tract at residues 1–20 is disordered; sequence MAHKKAGGSSRNGRDSAGRR.

This sequence belongs to the bacterial ribosomal protein bL27 family.

This is Large ribosomal subunit protein bL27 from Rhizorhabdus wittichii (strain DSM 6014 / CCUG 31198 / JCM 15750 / NBRC 105917 / EY 4224 / RW1) (Sphingomonas wittichii).